The sequence spans 494 residues: DBIRD complex subunit ZNF326 (494 aa).

Disordered regions lie at residues 1–22, 147–170, and 202–264; these read MDRE…QSFS, AFGG…RGQM, and KMAP…NSEK. The segment covering 7–22 has biased composition (polar residues); the sequence is SYNQRSVNSYGNQSFS. The Bipartite nuclear localization signal signature appears at 200–221; the sequence is KRKMAPPFKPVGFFGKKQKLSK. C2H2 AKAP95-type zinc fingers lie at residues 273–295 and 365–388; these read CSFC…SATH and CSAC…SADH. Residues 429–494 form a disordered region; it reads PFETQPDEQQ…CDPLTTTDEV (66 aa). The segment covering 433 to 451 has biased composition (acidic residues); that stretch reads QPDEQQQEQEEEEEEEEQQ.

The protein belongs to the AKAP95 family. In terms of assembly, component of the DBIRD complex.

The protein localises to the nucleus. In terms of biological role, core component of the DBIRD complex, a multiprotein complex that acts at the interface between core mRNP particles and RNA polymerase II (RNAPII) and integrates transcript elongation with the regulation of alternative splicing. In Xenopus laevis (African clawed frog), this protein is DBIRD complex subunit ZNF326 (znf326).